A 749-amino-acid chain; its full sequence is Catalase-peroxidase (749 aa).

The segment at residues 98–234 (WHAAGTYRVQ…LAASHMGLIY (137 aa)) is a cross-link (tryptophyl-tyrosyl-methioninium (Trp-Tyr) (with M-260)). Residue His-99 is the Proton acceptor of the active site. The segment at residues 234–260 (YVNPEGPNGEPDPVAAAHDIRTTFGRM) is a cross-link (tryptophyl-tyrosyl-methioninium (Tyr-Met) (with W-98)). His-275 is a heme b binding site.

Belongs to the peroxidase family. Peroxidase/catalase subfamily. As to quaternary structure, homodimer or homotetramer. Heme b serves as cofactor. Post-translationally, formation of the three residue Trp-Tyr-Met cross-link is important for the catalase, but not the peroxidase activity of the enzyme.

It is found in the cytoplasm. The catalysed reaction is H2O2 + AH2 = A + 2 H2O. The enzyme catalyses 2 H2O2 = O2 + 2 H2O. Functionally, bifunctional enzyme with both catalase and broad-spectrum peroxidase activity. This chain is Catalase-peroxidase, found in Mycosarcoma maydis (Corn smut fungus).